Reading from the N-terminus, the 525-residue chain is MSL complex subunit 3 (525 aa).

The 60-residue stretch at 13-72 (SGEKVLCFEPDPTKARVLYDAKIIDVIIGKDEKGRKIPEYLIHFNGWNRSWDRWAAEEHV) folds into the Tudor-knot domain. 2 disordered regions span residues 119–148 (KEKS…KEHR) and 302–383 (TTTT…DTSA). Basic and acidic residues predominate over residues 136-146 (SCGEKNGGIKE). The region spanning 172–521 (DERTITIDIP…CEAHYSTKNP (350 aa)) is the MRG domain. The segment at 294–444 (FFLPIKESTT…WKLVPDNYPP (151 aa)) is required for the histone acetyltransferase activity of the MSL complex. Phosphoserine occurs at positions 313 and 315. A compositionally biased stretch (low complexity) spans 320-332 (NPSTPQSTESQPP). S371 and S404 each carry phosphoserine. Phosphothreonine is present on T409. A phosphoserine mark is found at S411 and S415.

As to quaternary structure, component of the MSL histone acetyltransferase complex at least composed of the KAT8/MOF, MSL1/hampin, MSL2 and MSL3. Interacts (via the MRG domain) with MSL1 and KAT8/MOF. In terms of tissue distribution, in testis, expression is mostly restricted to the spermatocyte stage and only in a small portion of spermatogonia.

Its subcellular location is the nucleus. In terms of biological role, non-catalytic component of the MSL histone acetyltransferase complex, a multiprotein complex that mediates the majority of histone H4 acetylation at 'Lys-16' (H4K16ac), an epigenetic mark that prevents chromatin compaction. The MSL complex is required for chromosome stability and genome integrity by maintaining homeostatic levels of H4K16ac. The MSL complex is also involved in gene dosage by promoting up-regulation of genes expressed by the X chromosome. X up-regulation is required to compensate for autosomal biallelic expression. The MSL complex also participates in gene dosage compensation by promoting expression of Tsix non-coding RNA. Acts as a histone reader that specifically recognizes and binds histone H4 monomethylated at 'Lys-20' (H4K20Me1) in a DNA-dependent manner and is proposed to be involved in chromosomal targeting of the MSL complex. May play a role X inactivation in females. This chain is MSL complex subunit 3, found in Mus musculus (Mouse).